The primary structure comprises 249 residues: Ubiquinone biosynthesis O-methyltransferase (249 aa).

S-adenosyl-L-methionine-binding residues include R41, G72, D93, and M136.

This sequence belongs to the methyltransferase superfamily. UbiG/COQ3 family.

It carries out the reaction a 3-demethylubiquinol + S-adenosyl-L-methionine = a ubiquinol + S-adenosyl-L-homocysteine + H(+). It catalyses the reaction a 3-(all-trans-polyprenyl)benzene-1,2-diol + S-adenosyl-L-methionine = a 2-methoxy-6-(all-trans-polyprenyl)phenol + S-adenosyl-L-homocysteine + H(+). It participates in cofactor biosynthesis; ubiquinone biosynthesis. Functionally, O-methyltransferase that catalyzes the 2 O-methylation steps in the ubiquinone biosynthetic pathway. The sequence is that of Ubiquinone biosynthesis O-methyltransferase from Mesorhizobium japonicum (strain LMG 29417 / CECT 9101 / MAFF 303099) (Mesorhizobium loti (strain MAFF 303099)).